We begin with the raw amino-acid sequence, 429 residues long: Enolase (429 aa).

A (2R)-2-phosphoglycerate-binding site is contributed by Gln165. Residue Glu207 is the Proton donor of the active site. Residues Asp244, Glu287, and Asp314 each contribute to the Mg(2+) site. (2R)-2-phosphoglycerate contacts are provided by Lys339, Arg368, Ser369, and Lys390. The active-site Proton acceptor is Lys339.

Belongs to the enolase family. It depends on Mg(2+) as a cofactor.

It is found in the cytoplasm. It localises to the secreted. The protein localises to the cell surface. It catalyses the reaction (2R)-2-phosphoglycerate = phosphoenolpyruvate + H2O. Its pathway is carbohydrate degradation; glycolysis; pyruvate from D-glyceraldehyde 3-phosphate: step 4/5. Functionally, catalyzes the reversible conversion of 2-phosphoglycerate (2-PG) into phosphoenolpyruvate (PEP). It is essential for the degradation of carbohydrates via glycolysis. This is Enolase from Roseiflexus sp. (strain RS-1).